Here is a 320-residue protein sequence, read N- to C-terminus: ATP-dependent 6-phosphofructokinase (320 aa).

G12 contacts ATP. Residues 22 to 26 (RGVVR) and 55 to 60 (RYSVSD) contribute to the ADP site. ATP contacts are provided by residues 73-74 (RF) and 103-106 (GDGS). D104 provides a ligand contact to Mg(2+). A substrate-binding site is contributed by 126-128 (TID). D128 acts as the Proton acceptor in catalysis. An ADP-binding site is contributed by R155. Substrate contacts are provided by residues R163 and 170-172 (MGR). ADP-binding positions include 186–188 (GCE), K212, and 214–216 (KKH). Substrate is bound by residues E223, R244, and 250-253 (HIQR).

Belongs to the phosphofructokinase type A (PFKA) family. ATP-dependent PFK group I subfamily. Prokaryotic clade 'B1' sub-subfamily. In terms of assembly, homotetramer. Requires Mg(2+) as cofactor.

It is found in the cytoplasm. It carries out the reaction beta-D-fructose 6-phosphate + ATP = beta-D-fructose 1,6-bisphosphate + ADP + H(+). Its pathway is carbohydrate degradation; glycolysis; D-glyceraldehyde 3-phosphate and glycerone phosphate from D-glucose: step 3/4. Allosterically activated by ADP and other diphosphonucleosides, and allosterically inhibited by phosphoenolpyruvate. Its function is as follows. Catalyzes the phosphorylation of D-fructose 6-phosphate to fructose 1,6-bisphosphate by ATP, the first committing step of glycolysis. In Erwinia tasmaniensis (strain DSM 17950 / CFBP 7177 / CIP 109463 / NCPPB 4357 / Et1/99), this protein is ATP-dependent 6-phosphofructokinase.